Reading from the N-terminus, the 339-residue chain is NmrA-like family domain-containing oxidoreductase notA (339 aa).

NADP(+) is bound by residues glycine 13–glutamine 18, arginine 39–serine 43, aspartate 60–glycine 61, threonine 81–serine 83, lysine 140, and tyrosine 164–isoleucine 167.

This sequence belongs to the NmrA-type oxidoreductase family.

Functionally, nmrA-like family domain-containing oxidoreductase; part of the gene cluster that mediates the biosynthesis of notoamide, a fungal indole alkaloid that belongs to a family of natural products containing a characteristic bicyclo[2.2.2]diazaoctane core. The first step of notoamide biosynthesis involves coupling of L-proline and L-tryptophan by the bimodular NRPS notE, to produce cyclo-L-tryptophan-L-proline called brevianamide F. The reverse prenyltransferase notF then acts as a deoxybrevianamide E synthase and converts brevianamide F to deoxybrevianamide E via reverse prenylation at C-2 of the indole ring leading to the bicyclo[2.2.2]diazaoctane core. Deoxybrevianamide E is further hydroxylated at C-6 of the indole ring, likely catalyzed by the cytochrome P450 monooxygenase notG, to yield 6-hydroxy-deoxybrevianamide E. 6-hydroxy-deoxybrevianamide E is a specific substrate of the prenyltransferase notC for normal prenylation at C-7 to produce 6-hydroxy-7-prenyl-deoxybrevianamide, also called notoamide S. As the proposed pivotal branching point in notoamide biosynthesis, notoamide S can be diverted to notoamide E through an oxidative pyran ring closure putatively catalyzed by either notH cytochrome P450 monooxygenase or the notD FAD-linked oxidoreductase. This step would be followed by an indole 2,3-epoxidation-initiated pinacol-like rearrangement catalyzed by the notB FAD-dependent monooxygenase leading to the formation of notoamide C and notoamide D. On the other hand notoamide S is converted to notoamide T by notH (or notD), a bifunctional oxidase that also functions as the intramolecular Diels-Alderase responsible for generation of (+)-notoamide T. To generate antipodal (-)-notoaminide T, notH' (or notD') in Aspergillus versicolor is expected to catalyze a Diels-Alder reaction leading to the opposite stereochemistry. The remaining oxidoreductase notD (or notH) likely catalyzes the oxidative pyran ring formation to yield (+)-stephacidin A. The FAD-dependent monooxygenase notI is highly similar to notB and is predicted to catalyze a similar conversion from (+)-stephacidin A to (-)-notoamide B via the 2,3-epoxidation of (+)-stephacidin A followed by a pinacol-type rearrangement. Finally, it remains unclear which enzyme could be responsible for the final hydroxylation steps leading to notoamide A and sclerotiamide. This chain is NmrA-like family domain-containing oxidoreductase notA, found in Aspergillus sp. (strain MF297-2).